Here is an 841-residue protein sequence, read N- to C-terminus: Translation initiation factor IF-2 (841 aa).

Residues 94–258 form a disordered region; it reads QRSPEEIEAE…HGFQSPTGPV (165 aa). Positions 96–136 are enriched in basic and acidic residues; the sequence is SPEEIEAERKRELEERRAVENAARQKAEEEAKRRAEEEARR. Positions 137–173 are enriched in low complexity; the sequence is QPAAAQPAGTEAVAAPVAPVEAVREAAPVAAAPAPAA. 3 stretches are compositionally biased toward basic and acidic residues: residues 174–194, 200–217, and 225–234; these read DARKRDEPRRPDKPRADDNNR, DGERKNAPHRASVKEKAP, and TTDEESDGFR. A compositionally biased stretch (basic residues) spans 235-248; the sequence is RGGRGKAKLKKRNA. Positions 341–510 constitute a tr-type G domain; it reads SRAPVVTVMG…LLQAEVLELK (170 aa). The segment at 350–357 is G1; sequence GHVDHGKT. 350 to 357 contributes to the GTP binding site; the sequence is GHVDHGKT. The interval 375–379 is G2; that stretch reads GITQH. A G3 region spans residues 396 to 399; the sequence is DTPG. GTP contacts are provided by residues 396–400 and 450–453; these read DTPGH and NKID. A G4 region spans residues 450–453; sequence NKID. The segment at 486-488 is G5; sequence SAK.

It belongs to the TRAFAC class translation factor GTPase superfamily. Classic translation factor GTPase family. IF-2 subfamily.

The protein localises to the cytoplasm. In terms of biological role, one of the essential components for the initiation of protein synthesis. Protects formylmethionyl-tRNA from spontaneous hydrolysis and promotes its binding to the 30S ribosomal subunits. Also involved in the hydrolysis of GTP during the formation of the 70S ribosomal complex. This is Translation initiation factor IF-2 from Pseudomonas fluorescens (strain SBW25).